The sequence spans 235 residues: Ribonuclease 3 (235 aa).

Positions 8–137 (PAELARRIGI…VIGAIFLSGG (130 aa)) constitute an RNase III domain. Residue Glu50 participates in Mg(2+) binding. The active site involves Asp54. Mg(2+) contacts are provided by Asp123 and Glu126. Residue Glu126 is part of the active site. One can recognise a DRBM domain in the interval 163–232 (DNKTAFQEWV…AGRAMREWAG (70 aa)). Positions 211 to 235 (QGRTKKEAEQQAAGRAMREWAGRKG) are disordered. The segment covering 226–235 (AMREWAGRKG) has biased composition (basic and acidic residues).

It belongs to the ribonuclease III family. As to quaternary structure, homodimer. Mg(2+) serves as cofactor.

The protein localises to the cytoplasm. The enzyme catalyses Endonucleolytic cleavage to 5'-phosphomonoester.. Digests double-stranded RNA. Involved in the processing of primary rRNA transcript to yield the immediate precursors to the large and small rRNAs (23S and 16S). Processes some mRNAs, and tRNAs when they are encoded in the rRNA operon. Processes pre-crRNA and tracrRNA of type II CRISPR loci if present in the organism. This is Ribonuclease 3 from Heliobacterium modesticaldum (strain ATCC 51547 / Ice1).